A 102-amino-acid polypeptide reads, in one-letter code: Large ribosomal subunit protein uL24 (102 aa).

This sequence belongs to the universal ribosomal protein uL24 family. Part of the 50S ribosomal subunit.

In terms of biological role, one of two assembly initiator proteins, it binds directly to the 5'-end of the 23S rRNA, where it nucleates assembly of the 50S subunit. Functionally, one of the proteins that surrounds the polypeptide exit tunnel on the outside of the subunit. The polypeptide is Large ribosomal subunit protein uL24 (Paraburkholderia xenovorans (strain LB400)).